Here is a 475-residue protein sequence, read N- to C-terminus: Ankyrin repeat, SAM and basic leucine zipper domain-containing protein 1 (475 aa).

The tract at residues 1–25 is disordered; that stretch reads MAAGPLRGLAVAGGGESSDSEDDGW. Residues S17, S18, and S20 each carry the phosphoserine modification. 6 ANK repeats span residues 45–74, 78–107, 110–144, 148–177, 181–210, and 214–243; these read ERQE…SVDT, YGWT…NASF, DKQT…DPNV, RLMT…EVNT, NGYT…NKMI, and DGKT…PLEG. One can recognise an SAM domain in the interval 272–334; that stretch reads SYTAFGDLEI…KIMAALKELE (63 aa).

As to quaternary structure, interacts with DDX4, PIWIL1, RANBP9 and TDRD1.

It is found in the cytoplasm. Plays a central role during spermatogenesis by repressing transposable elements and preventing their mobilization, which is essential for the germline integrity. Acts via the piRNA metabolic process, which mediates the repression of transposable elements during meiosis by forming complexes composed of piRNAs and Piwi proteins and governs the methylation and subsequent repression of transposons. Its association with pi-bodies suggests a participation in the primary piRNAs metabolic process. Required prior to the pachytene stage to facilitate the production of multiple types of piRNAs, including those associated with repeats involved in the regulation of retrotransposons. May act by mediating protein-protein interactions during germ cell maturation. The protein is Ankyrin repeat, SAM and basic leucine zipper domain-containing protein 1 (ASZ1) of Bos taurus (Bovine).